The primary structure comprises 76 residues: cAMP-dependent protein kinase inhibitor alpha (76 aa).

Thr2 is modified (N-acetylthreonine). The tract at residues 49-76 (KTEGEEDAQRNSTEQSGEAQGEAAKSES) is disordered.

The protein belongs to the PKI family.

Functionally, extremely potent competitive inhibitor of cAMP-dependent protein kinase activity, this protein interacts with the catalytic subunit of the enzyme after the cAMP-induced dissociation of its regulatory chains. The chain is cAMP-dependent protein kinase inhibitor alpha (PKIA) from Bos taurus (Bovine).